Consider the following 30-residue polypeptide: Glucagon-like peptide (30 aa).

Arg30 carries the post-translational modification Arginine amide.

Belongs to the glucagon family.

The protein resides in the secreted. The chain is Glucagon-like peptide from Anguilla anguilla (European freshwater eel).